A 204-amino-acid chain; its full sequence is Protein GrpE (204 aa).

2 stretches are compositionally biased toward basic and acidic residues: residues 1–21 (MEEL…EVKG) and 36–46 (EEKIETEVEQK). Residues 1–46 (MEELEKDKIERNEEMSEEVKGEGPPSELEQSEEVVEEKIETEVEQK) form a disordered region.

This sequence belongs to the GrpE family. As to quaternary structure, homodimer.

The protein localises to the cytoplasm. Functionally, participates actively in the response to hyperosmotic and heat shock by preventing the aggregation of stress-denatured proteins, in association with DnaK and GrpE. It is the nucleotide exchange factor for DnaK and may function as a thermosensor. Unfolded proteins bind initially to DnaJ; upon interaction with the DnaJ-bound protein, DnaK hydrolyzes its bound ATP, resulting in the formation of a stable complex. GrpE releases ADP from DnaK; ATP binding to DnaK triggers the release of the substrate protein, thus completing the reaction cycle. Several rounds of ATP-dependent interactions between DnaJ, DnaK and GrpE are required for fully efficient folding. The polypeptide is Protein GrpE (Caldanaerobacter subterraneus subsp. tengcongensis (strain DSM 15242 / JCM 11007 / NBRC 100824 / MB4) (Thermoanaerobacter tengcongensis)).